We begin with the raw amino-acid sequence, 393 residues long: Isocitrate dehydrogenase [NAD] subunit gamma, mitochondrial (393 aa).

Residues 1–39 (MALKVATVAGSAAKAVLGPALLCRPWEVLGAHEVPSRNI) constitute a mitochondrion transit peptide. Residues threonine 120 and asparagine 133 each contribute to the citrate site. Substrate contacts are provided by arginine 136, arginine 167, and aspartate 254. Aspartate 254 serves as a coordination point for Mn(2+). Asparagine 312, threonine 313, and asparagine 324 together coordinate ADP.

The protein belongs to the isocitrate and isopropylmalate dehydrogenases family. Heterooligomer of subunits alpha (IDH3A), beta (IDH3B), and gamma (IDH3G) in the apparent ratio of 2:1:1. The heterodimer containing one IDH3A and one IDH3B subunit and the heterodimer containing one IDH3A and one IDH3G subunit assemble into a heterotetramer (which contains two subunits of IDH3A, one of IDH3B and one of IDH3G) and further into the heterooctamer. Mg(2+) is required as a cofactor. Requires Mn(2+) as cofactor.

It is found in the mitochondrion. Its activity is regulated as follows. The heterotetramer and the heterodimer composed of IDH3A and IDH3G subunits can be allosterically activated by citrate (CIT) or/and ADP, and the two activators can act independently or synergistically. The heterodimer composed of IDH3A and IDH3B subunits cannot be allosterically regulated and the allosteric regulation of the heterotetramer is through the IDH3G subunit and not the IDH3B subunit. The IDH3G subunit contains the allosteric site which consists of a CIT-binding site and an ADP-binding site, and the binding of CIT and ADP causes conformational changes at the allosteric site which are transmitted to the active site in the catalytic subunit (IDH3A) through a cascade of conformational changes at the heterodimer interface, leading to stabilization of the isocitrate-binding at the active site and thus activation of the enzyme. ATP can activate the heterotetramer and the heterodimer composed of IDH3A and IDH3G subunits at low concentrations but inhibits their activities at high concentrations, whereas ATP exhibits only inhibitory effect on the heterodimer composed of IDH3A and IDH3B subunits. Regulatory subunit which plays a role in the allosteric regulation of the enzyme catalyzing the decarboxylation of isocitrate (ICT) into alpha-ketoglutarate. The heterodimer composed of the alpha (IDH3A) and beta (IDH3B) subunits and the heterodimer composed of the alpha (IDH3A) and gamma (IDH3G) subunits, have considerable basal activity but the full activity of the heterotetramer (containing two subunits of IDH3A, one of IDH3B and one of IDH3G) requires the assembly and cooperative function of both heterodimers. In Homo sapiens (Human), this protein is Isocitrate dehydrogenase [NAD] subunit gamma, mitochondrial (IDH3G).